The primary structure comprises 363 residues: Glyceraldehyde-3-phosphate dehydrogenase, muscle (363 aa).

Positions 1 to 176 (MVKVGVNGFG…KYDKSLKIVS (176 aa)) are interaction with WARS. Lys-3 is subject to N6,N6-dimethyllysine. Asn-7 carries the deamidated asparagine modification. NAD(+)-binding positions include 11–12 (RI) and Asp-33. Phosphotyrosine is present on Tyr-70. An N6-acetyllysine modification is found at Lys-89. Asn-92 carries the deamidated asparagine modification. Position 94 is an N6,N6-dimethyllysine (Lys-94). Asn-98 carries the deamidated asparagine modification. Thr-103 is subject to Phosphothreonine. NAD(+)-binding residues include Arg-108 and Ser-150. 2 positions are modified to phosphoserine: Ser-150 and Ser-176. Asn-177 carries the post-translational modification Deamidated asparagine. Ser-179 is modified (phosphoserine). 179 to 181 (SCT) is a binding site for D-glyceraldehyde 3-phosphate. Residue Cys-180 is the Nucleophile of the active site. Residue Cys-180 is modified to ADP-ribosylcysteine; by autocatalysis; in irreversibly inhibited form. The residue at position 180 (Cys-180) is a Cysteine persulfide. Cys-180 bears the S-(2-succinyl)cysteine mark. S-nitrosocysteine; in reversibly inhibited form is present on Cys-180. At Thr-181 the chain carries Phosphothreonine. Asn-183 carries the post-translational modification Deamidated asparagine. Residues Thr-205, Thr-210, and Thr-212 each carry the phosphothreonine modification. Residue Thr-210 coordinates D-glyceraldehyde 3-phosphate. Lys-214 is covalently cross-linked (Glycyl lysine isopeptide (Lys-Gly) (interchain with G-Cter in SUMO2)). N6,N6-dimethyllysine; alternate is present on Lys-222. Lys-222 is modified (N6-acetyllysine; alternate). Residue Lys-222 is modified to N6-malonyllysine; alternate. Position 239 is a phosphothreonine (Thr-239). 239 to 240 (TG) is a binding site for D-glyceraldehyde 3-phosphate. N6,N6-dimethyllysine; alternate is present on Lys-243. Residue Lys-243 is modified to N6-malonyllysine; alternate. Lys-247 carries the post-translational modification N6-acetyllysine. Asn-253 carries the post-translational modification Deamidated asparagine. An N6,N6-dimethyllysine; alternate modification is found at Lys-255. Lys-255 is subject to N6-acetyllysine; alternate. Thr-257 is subject to Phosphothreonine. Arg-262 is a D-glyceraldehyde 3-phosphate binding site. Residue Thr-265 is modified to Phosphothreonine. Phosphoserine is present on Ser-269. The residue at position 275 (Cys-275) is an S-(2-succinyl)cysteine. S-nitrosocysteine is present on Cys-275. Lys-282 is modified (N6-acetyllysine). At Lys-291 the chain carries N6,N6-dimethyllysine. Ser-340 carries the phosphoserine modification. Asn-344 carries the post-translational modification Deamidated asparagine. Residue Asn-344 participates in NAD(+) binding. Position 361 is a phosphoserine (Ser-361). An N6,N6-dimethyllysine modification is found at Lys-362.

It belongs to the glyceraldehyde-3-phosphate dehydrogenase family. Homotetramer. Interacts with TPPP; the interaction is direct. Interacts (when S-nitrosylated) with SIAH1; leading to nuclear translocation. Interacts with RILPL1/GOSPEL, leading to prevent the interaction between GAPDH and SIAH1 and prevent nuclear translocation. Interacts with CHP1; the interaction increases the binding of CHP1 with microtubules. Associates with microtubules. Interacts with EIF1AD, USP25, PRKCI and WARS1. Interacts with phosphorylated RPL13A; inhibited by oxidatively-modified low-densitity lipoprotein (LDL(ox)). Component of the GAIT complex. Interacts with FKBP6; leading to inhibit GAPDH catalytic activity. Interacts with TRAF2, promoting TRAF2 ubiquitination. Interacts with TRAF3, promoting TRAF3 ubiquitination. ISGylated. Post-translationally, S-nitrosylation of Cys-180 leads to interaction with SIAH1, followed by translocation to the nucleus S-nitrosylation of Cys-275 is induced by interferon-gamma and LDL(ox) implicating the iNOS-S100A8/9 transnitrosylase complex and seems to prevent interaction with phosphorylated RPL13A and to interfere with GAIT complex activity. In terms of processing, sulfhydration at Cys-180 increases catalytic activity.

It localises to the cytoplasm. Its subcellular location is the cytosol. The protein localises to the cytoskeleton. It is found in the nucleus. The catalysed reaction is D-glyceraldehyde 3-phosphate + phosphate + NAD(+) = (2R)-3-phospho-glyceroyl phosphate + NADH + H(+). It catalyses the reaction S-nitroso-L-cysteinyl-[GAPDH] + L-cysteinyl-[protein] = L-cysteinyl-[GAPDH] + S-nitroso-L-cysteinyl-[protein]. The protein operates within carbohydrate degradation; glycolysis; pyruvate from D-glyceraldehyde 3-phosphate: step 1/5. Its activity is regulated as follows. Glyceraldehyde-3-phosphate dehydrogenase activity is inhibited by fumarate, via the formation of S-(2-succinyl)cysteine residues. Functionally, has both glyceraldehyde-3-phosphate dehydrogenase and nitrosylase activities, thereby playing a role in glycolysis and nuclear functions, respectively. Glyceraldehyde-3-phosphate dehydrogenase is a key enzyme in glycolysis that catalyzes the first step of the pathway by converting D-glyceraldehyde 3-phosphate (G3P) into 3-phospho-D-glyceroyl phosphate. Modulates the organization and assembly of the cytoskeleton. Facilitates the CHP1-dependent microtubule and membrane associations through its ability to stimulate the binding of CHP1 to microtubules. Component of the GAIT (gamma interferon-activated inhibitor of translation) complex which mediates interferon-gamma-induced transcript-selective translation inhibition in inflammation processes. Upon interferon-gamma treatment assembles into the GAIT complex which binds to stem loop-containing GAIT elements in the 3'-UTR of diverse inflammatory mRNAs (such as ceruplasmin) and suppresses their translation. Also plays a role in innate immunity by promoting TNF-induced NF-kappa-B activation and type I interferon production, via interaction with TRAF2 and TRAF3, respectively. Participates in nuclear events including transcription, RNA transport, DNA replication and apoptosis. Nuclear functions are probably due to the nitrosylase activity that mediates cysteine S-nitrosylation of nuclear target proteins such as SIRT1, HDAC2 and PRKDC. The sequence is that of Glyceraldehyde-3-phosphate dehydrogenase, muscle from Jaculus orientalis (Greater Egyptian jerboa).